Consider the following 419-residue polypeptide: Dual specificity protein phosphatase 7 (419 aa).

Positions 1 to 41 (MKNQLRGPPVRAHMSTSGAAAAGGTRAGSEPGAGSGSSAGI) are disordered. A compositionally biased stretch (low complexity) spans 15-30 (STSGAAAAGGTRAGSE). The span at 31–41 (PGAGSGSSAGI) shows a compositional bias: gly residues. The Rhodanese domain occupies 68 to 187 (GGASLLLLDC…FQTEYSEHCE (120 aa)). Residues 216-240 (CSDGESDRELPSSATESDGSPVPSS) form a disordered region. Over residues 227-240 (SSATESDGSPVPSS) the composition is skewed to polar residues. In terms of domain architecture, Tyrosine-protein phosphatase spans 244-387 (FPVQILPYLY…LLDFERTLGL (144 aa)). Cys-331 serves as the catalytic Phosphocysteine intermediate. Residue 331–337 (CLAGISR) coordinates substrate.

Belongs to the protein-tyrosine phosphatase family. Non-receptor class dual specificity subfamily. As to quaternary structure, interacts with MAPK1/ERK2; the interaction enhances DUSP7 phosphatase activity.

The protein resides in the cytoplasm. It catalyses the reaction O-phospho-L-tyrosyl-[protein] + H2O = L-tyrosyl-[protein] + phosphate. The catalysed reaction is O-phospho-L-seryl-[protein] + H2O = L-seryl-[protein] + phosphate. It carries out the reaction O-phospho-L-threonyl-[protein] + H2O = L-threonyl-[protein] + phosphate. Its activity is regulated as follows. Strongly inhibited by sodium orthovanadate. Its function is as follows. Dual specificity protein phosphatase. Shows high activity towards MAPK1/ERK2. Also has lower activity towards MAPK14 and MAPK8. In arrested oocytes, plays a role in meiotic resumption. Promotes nuclear envelope breakdown and activation of the CDK1/Cyclin-B complex in oocytes, probably by dephosphorylating and inactivating the conventional protein kinase C (cPKC) isozyme PRKCB. May also inactivate PRKCA and/or PRKCG. Also important in oocytes for normal chromosome alignment on the metaphase plate and progression to anaphase, where it might regulate activity of the spindle-assembly checkpoint (SAC) complex. In Rattus norvegicus (Rat), this protein is Dual specificity protein phosphatase 7.